Here is a 449-residue protein sequence, read N- to C-terminus: GTPase Der (449 aa).

2 EngA-type G domains span residues 3-167 (AVIA…PTSE) and 178-351 (PRIA…IDSR). Residues 9–16 (GRPNVGKS), 56–60 (DTGGF), 119–122 (NKMD), 184–191 (GRPNVGKS), 231–235 (DTAGM), and 296–299 (NKWD) each bind GTP. Positions 352–436 (RHFSTAELNR…PLRLVFRQGE (85 aa)) constitute a KH-like domain.

The protein belongs to the TRAFAC class TrmE-Era-EngA-EngB-Septin-like GTPase superfamily. EngA (Der) GTPase family. As to quaternary structure, associates with the 50S ribosomal subunit.

Functionally, GTPase that plays an essential role in the late steps of ribosome biogenesis. In Acidithiobacillus ferrooxidans (strain ATCC 23270 / DSM 14882 / CIP 104768 / NCIMB 8455) (Ferrobacillus ferrooxidans (strain ATCC 23270)), this protein is GTPase Der.